The chain runs to 230 residues: Protein GrpE (230 aa).

Disordered stretches follow at residues 1–26 (MADEKNKPENPDLDQRDINNPRDREA) and 209–230 (GVSKGGPKVSAENGASTSEDNA). Residues 221–230 (NGASTSEDNA) are compositionally biased toward polar residues.

This sequence belongs to the GrpE family. In terms of assembly, homodimer.

It is found in the cytoplasm. Functionally, participates actively in the response to hyperosmotic and heat shock by preventing the aggregation of stress-denatured proteins, in association with DnaK and GrpE. It is the nucleotide exchange factor for DnaK and may function as a thermosensor. Unfolded proteins bind initially to DnaJ; upon interaction with the DnaJ-bound protein, DnaK hydrolyzes its bound ATP, resulting in the formation of a stable complex. GrpE releases ADP from DnaK; ATP binding to DnaK triggers the release of the substrate protein, thus completing the reaction cycle. Several rounds of ATP-dependent interactions between DnaJ, DnaK and GrpE are required for fully efficient folding. The chain is Protein GrpE from Brucella suis biovar 1 (strain 1330).